We begin with the raw amino-acid sequence, 496 residues long: Glutamate--tRNA ligase (496 aa).

A 'HIGH' region motif is present at residues Pro-11–Asn-21. The 'KMSKS' region motif lies at Lys-255–Arg-259. Lys-258 lines the ATP pocket.

This sequence belongs to the class-I aminoacyl-tRNA synthetase family. Glutamate--tRNA ligase type 1 subfamily. As to quaternary structure, monomer.

It localises to the cytoplasm. It catalyses the reaction tRNA(Glu) + L-glutamate + ATP = L-glutamyl-tRNA(Glu) + AMP + diphosphate. Functionally, catalyzes the attachment of glutamate to tRNA(Glu) in a two-step reaction: glutamate is first activated by ATP to form Glu-AMP and then transferred to the acceptor end of tRNA(Glu). This is Glutamate--tRNA ligase from Streptococcus pyogenes serotype M49 (strain NZ131).